Reading from the N-terminus, the 289-residue chain is G1/S-specific cyclin-D2 (289 aa).

Positions 26–151 constitute a Cyclin N-terminal domain; it reads VLQNLLTIEE…VVLGKLKWNL (126 aa). A disordered region spans residues 264 to 289; the sequence is DQRDGSKSEDELDQASTPTDVRDIDL. Position 271 is a phosphoserine (Ser-271). Thr-280 carries the phosphothreonine modification.

It belongs to the cyclin family. Cyclin D subfamily. As to quaternary structure, interacts with either CDK4 or CDK6 protein kinase to form a serine/threonine kinase holoenzyme complex. The cyclin subunit imparts substrate specificity to the complex. In terms of processing, phosphorylation at Thr-280 by MAP kinases is required for ubiquitination and degradation by the DCX(AMBRA1) complex. Ubiquitinated by the DCX(AMBRA1) complex during the transition from G1 to S cell phase, leading to its degradation: ubiquitination is dependent on Thr-280 phosphorylation. The DCX(AMBRA1) complex represents the major regulator of CCND2 stability during the G1/S transition. Polyubiquitinated by the SCF(FBXL2) complex, leading to proteasomal degradation.

It is found in the nucleus. The protein localises to the cytoplasm. Its subcellular location is the nucleus membrane. Regulatory component of the cyclin D2-CDK4 (DC) complex that phosphorylates and inhibits members of the retinoblastoma (RB) protein family including RB1 and regulates the cell-cycle during G(1)/S transition. Phosphorylation of RB1 allows dissociation of the transcription factor E2F from the RB/E2F complex and the subsequent transcription of E2F target genes which are responsible for the progression through the G(1) phase. Hypophosphorylates RB1 in early G(1) phase. Cyclin D-CDK4 complexes are major integrators of various mitogenenic and antimitogenic signals. The sequence is that of G1/S-specific cyclin-D2 from Homo sapiens (Human).